The following is a 901-amino-acid chain: Nuclear factor of activated T-cells, cytoplasmic 4 (901 aa).

The span at 1 to 11 shows a compositional bias: acidic residues; that stretch reads MGAASCEDEEL. Disordered regions lie at residues 1–180 and 203–361; these read MGAA…SSWS and NEAA…TEDS. The segment covering 61–81 has biased composition (pro residues); sequence IPRPPPPRPGMHSPPPRPAPS. Residues 96–109 are compositionally biased toward gly residues; the sequence is GGPGGTAGGTGGGR. Residues 114-119 form a calcineurin-binding region; sequence PSIRIT. The segment covering 114–123 has biased composition (low complexity); the sequence is PSIRITSISP. Positions 151–165 are enriched in gly residues; that stretch reads GFGGYREAGGQGGGA. A compositionally biased stretch (low complexity) spans 166-180; sequence FFSPSPGSSSLSSWS. Phosphoserine occurs at positions 168, 170, 213, and 217. An SP 1 repeat occupies 213–229; that stretch reads SPLPSPRASPRPWTPED. Residues 213-293 are 2 approximate SP repeats; sequence SPLPSPRASP…LSRRGSLGEE (81 aa). 2 stretches are compositionally biased toward pro residues: residues 215–227 and 254–263; these read LPSP…PWTP and GPIPASPRPA. The Nuclear localization signal signature appears at 268–270; sequence KRR. Low complexity predominate over residues 272–288; it reads SSSGTPSSASPALSRRG. One copy of the SP 2; approximate repeat lies at 277–293; it reads PSSASPALSRRGSLGEE. Residues S289, S334, and S344 each carry the phosphoserine modification. In terms of domain architecture, RHD spans 401–582; the sequence is SALPPLDWPL…VPIECSQRSA (182 aa). The DNA-binding element occupies 430–437; sequence RAHYETEG. In terms of domain architecture, IPT/TIG spans 586–683; that stretch reads PQVEAYSPSA…KRSPTQSFKF (98 aa). A Nuclear localization signal motif is present at residues 672 to 674; it reads RRK. A Glycyl lysine isopeptide (Lys-Gly) (interchain with G-Cter in SUMO2) cross-link involves residue K689. 2 disordered regions span residues 697–721 and 791–868; these read SLRG…PRPP and QYGG…GFRD. Over residues 805 to 822 the composition is skewed to pro residues; it reads FSPPAPFRPPLPSSPPLE.

Member of the multicomponent NFATC transcription complex that consists of at least two components, a pre-existing cytoplasmic component NFATC2 and an inducible nuclear component NFATC1. Other NFAT proteins, such as NFATC4, NFATC3, or members of the activating protein-1 (AP-1) family and MAF can also bind the complex. NFAT proteins can bind DNA as monomers or dimers. Component of a promoter-binding complex composed of STAT3, NFATC3 and NFATC4; complex formation is enhanced by calcineurin. Interacts with CREBBP; this interaction potentiates transcription activation. Interacts with MAPK8/JNK1 and MAPK9/JNK2. Interacts with GATA4 (via the second Zn finger). Interacts (via N-terminus) with IRAK1 (via C-terminus). Interacts with RPS6KA3. Interacts with HOMER1, HOMER2 and HOMER3; this interaction competes with calcineurin/PPP3CA-binding and hence prevents NFATC4 dephosphorylation and activation. Interacts with ESR1 and ESR2; this interaction decreases NFATC4 transcriptional activity. Interacts with MTOR and MAPK7/ERK5. Interacts with TRIM17; this interaction prevents NFATC3 nuclear localization. Interacts with TCF25 (via C-terminus); the interaction leads to suppression of NFATC4 transcription factor activity and is reduced following stimulation with angiotensin-2. In terms of processing, phosphorylated by NFATC-kinases; dephosphorylated by calcineurin/PPP3CA. Phosphorylated on Ser-168 and Ser-170 by MTOR, IRAK1, MAPK7/ERK5 and MAPK14/p38, on Ser-213 and Ser-217 by MAPK8 and MAPK9, and on Ser-289 and Ser-344 by RPS6KA3. Phosphorylated by GSK3B; this phosphorylation markedly increases NFATC4 ubiquitination. Phosphorylation by MAPK8/JNK1, MAPK9/JNK2 and RPS6KA3 may stimulate NFATC4 transcriptional activity. Phosphorylation at Ser-168 and Ser-170 is stimulated by UV irradiation. Ubiquitinated, leading to degradation by the proteasome. Ubiquitination may be stimulated by GSK3B-dependent phosphorylation. Polyubiquitin linkage mainly occurs through 'Lys-48'. In terms of tissue distribution, expressed in heart (at protein level).

The protein localises to the cytoplasm. The protein resides in the nucleus. Its function is as follows. Ca(2+)-regulated transcription factor that is involved in several processes, including the development and function of the immune, cardiovascular, musculoskeletal, and nervous systems. Involved in T-cell activation, stimulating the transcription of cytokine genes, including that of IL2 and IL4. Along with NFATC3, involved in embryonic heart development. Following JAK/STAT signaling activation and as part of a complex with NFATC3 and STAT3, binds to the alpha-beta E4 promoter region of CRYAB and activates transcription in cardiomyocytes. Involved in mitochondrial energy metabolism required for cardiac morphogenesis and function. Transactivates many genes involved in heart physiology. Along with GATA4, binds to and activates NPPB/BNP promoter. Activates NPPA/ANP/ANF and MYH7/beta-MHC transcription. Binds to and transactivates AGTR2 gene promoter. Involved in the regulation of adult hippocampal neurogenesis. Involved in BDNF-driven pro-survival signaling in hippocampal adult-born neurons. Involved in the formation of long-term spatial memory and long-term potentiation. In cochlear nucleus neurons, may play a role in deafferentation-induced apoptosis during a developmental critical period when auditory neurons depend on afferent input for survival. Binds to and activates the BACE1/Beta-secretase 1 promoter, hence may regulate the proteolytic processing of the amyloid precursor protein (APP). Plays a role in adipocyte differentiation. May be involved in myoblast differentiation into myotubes. Binds the consensus DNA sequence 5'-GGAAAAT-3'. In the presence of CREBBP, activates TNF transcription. Binds to PPARG gene promoter and regulates its activity. Binds to PPARG and REG3G gene promoters. The polypeptide is Nuclear factor of activated T-cells, cytoplasmic 4 (Nfatc4) (Rattus norvegicus (Rat)).